A 216-amino-acid polypeptide reads, in one-letter code: MPISSLVPLTEIRQYCLQLGFSLSDQEIESLRGYLCLLTKWNKVMNLVGFTTWKTICSNLIIDSFHLAIFIRSLSLPTDPLCWDFGSGAGLPGIPLRIIWKEGSYWLVESREKRAIFLKTLLAQYPLTQTYVYCGRVEEFMLANCLSDVALIVSRAFMPWQALLKLIEKKISFKGVIVLLLNDIPKNIDSCWYIQTTYPYSIGGEKRFFVALKKAS.

Residues Gly-86, Leu-91, 137 to 138 (VE), and Arg-155 each bind S-adenosyl-L-methionine.

This sequence belongs to the methyltransferase superfamily. RNA methyltransferase RsmG family.

It localises to the cytoplasm. The catalysed reaction is guanosine(527) in 16S rRNA + S-adenosyl-L-methionine = N(7)-methylguanosine(527) in 16S rRNA + S-adenosyl-L-homocysteine. Its function is as follows. Specifically methylates the N7 position of guanine in position 527 of 16S rRNA. The protein is Ribosomal RNA small subunit methyltransferase G of Lawsonia intracellularis (strain PHE/MN1-00).